Reading from the N-terminus, the 674-residue chain is MANPASYRPRTGEIPTNPGVYRFRDPHGRVIYVGKAKSLRSRLNSYFANPAGLLPKTYAMVHAASSVEWTVVGSELESLQLEYTWIKEFKPRFNVVFRDDKTYPYLAVTLGEKYPRVQVMRGDKRKGTRYFGPYTAGAIRETMDTLLRVFPVRSCSAGVFKRAESSGRPCLLGYIDKCSAPCVGRISPEDHRALAEDFCAFMGGEAKRFTNKLEKQMAAAVARLDYEQAARIRDDITALRKVFERNAVVLAEDTDADVFALHEDELEAAVQVFHVRGGRIRGQRGWVVEKVEDFTTPDLVEHLLQQVYGEDGETHGRLPREVLVPVAPSNAEELTEWLSGIRGARVDVRVPQRGDKAALMSTVRENAEHALKLHKTRRAGDLTVRSQALQELQEALDLPVPLLRIECFDVSHVQGTNVVASMVVVEDGLPKKSDYRKFSITGPAASDDTAAMHDVLTRRFRHYLQDKSAQVDEDVLEAGTAEAAAEAAADAAAEAAVADTTTPIPKTKFAYPPNLVVVDGGQPQVNAAARALADLGIDDVYVVGLAKRLEEVWLPDSDFPVILPRTSQGLYLLQRIRDEAHRFAISFHRQKRGKAMTVSALDGVPGLGASKRKALLAHFGSVKGVKAATPEELAQAKGIGPALAAAIVSHFTGGGPAAVTVPAINMTTGEIIET.

In terms of domain architecture, GIY-YIG spans 16–95; that stretch reads TNPGVYRFRD…IKEFKPRFNV (80 aa). The 36-residue stretch at 207–242 folds into the UVR domain; the sequence is KRFTNKLEKQMAAAVARLDYEQAARIRDDITALRKV.

It belongs to the UvrC family. As to quaternary structure, interacts with UvrB in an incision complex.

The protein resides in the cytoplasm. The UvrABC repair system catalyzes the recognition and processing of DNA lesions. UvrC both incises the 5' and 3' sides of the lesion. The N-terminal half is responsible for the 3' incision and the C-terminal half is responsible for the 5' incision. The protein is UvrABC system protein C of Pseudarthrobacter chlorophenolicus (strain ATCC 700700 / DSM 12829 / CIP 107037 / JCM 12360 / KCTC 9906 / NCIMB 13794 / A6) (Arthrobacter chlorophenolicus).